We begin with the raw amino-acid sequence, 549 residues long: Thermosome subunit alpha (549 aa).

Positions 529-549 (EGRQGAECPPNGCMGGMDMRM) are disordered.

The protein belongs to the TCP-1 chaperonin family. In terms of assembly, forms a Heterooligomeric complex of two stacked eight-membered rings.

Functionally, molecular chaperone; binds unfolded polypeptides in vitro, and has a weak ATPase activity. This is Thermosome subunit alpha (thsA) from Thermococcus sp. (strain KS-8).